Consider the following 385-residue polypeptide: AA13 family lytic polysaccharide monooxygenase NCU08746 (385 aa).

Residues 1 to 18 form the signal peptide; the sequence is MKFSIISVALASAITVDA. Histidine 19 is a binding site for Cu(2+). The residue at position 19 (histidine 19) is a Methylhistidine. One can recognise a Chitin-binding type-4 domain in the interval 19 to 248; it reads HGYLTIPFSR…AQVYLSCADI (230 aa). An intrachain disulfide couples cysteine 40 to cysteine 43. The N-linked (GlcNAc...) asparagine glycan is linked to asparagine 54. 6 disulfides stabilise this stretch: cysteine 66-cysteine 245, cysteine 102-cysteine 203, cysteine 118-cysteine 145, cysteine 153-cysteine 161, cysteine 167-cysteine 173, and cysteine 181-cysteine 192. Histidine 109 provides a ligand contact to Cu(2+). Tyrosine 242 is a Cu(2+) binding site. The region spanning 278 to 385 is the CBM20 domain; sequence CTPAATVAVT…ESVAVESSWK (108 aa). N-linked (GlcNAc...) asparagine glycosylation is present at asparagine 365.

It belongs to the polysaccharide monooxygenase AA13 family. Cu(2+) is required as a cofactor.

Its subcellular location is the secreted. The catalysed reaction is starch + reduced acceptor + O2 = D-glucono-1,5-lactone-terminated malto-oligosaccharides + short-chain malto-oligosaccharides + acceptor + H2O.. In terms of biological role, starch-active lytic polysaccharide monooxygenase that oxidizes the C1 position of starch substrates, but not in cellulose or chitin. Catalysis by LPMOs requires the reduction of the active-site copper from Cu(II) to Cu(I) by a reducing agent and H(2)O(2) or O(2) as a cosubstrate. This is AA13 family lytic polysaccharide monooxygenase NCU08746 from Neurospora crassa (strain ATCC 24698 / 74-OR23-1A / CBS 708.71 / DSM 1257 / FGSC 987).